The primary structure comprises 555 residues: CTP synthase (555 aa).

An amidoligase domain region spans residues 1-267 (MPKFVFVTGG…CKEVLEFLDL (267 aa)). Ser-13 contributes to the CTP binding site. UTP is bound at residue Ser-13. ATP contacts are provided by residues 14–19 (SIGKGI) and Asp-71. Residues Asp-71 and Glu-141 each coordinate Mg(2+). Residues 148 to 150 (DIE), 188 to 193 (KTKPTQ), and Lys-224 contribute to the CTP site. UTP-binding positions include 188–193 (KTKPTQ) and Lys-224. Residues 292-534 (KVAVVGKYVQ…IAAAQSRLPR (243 aa)) form the Glutamine amidotransferase type-1 domain. Position 354 (Gly-354) interacts with L-glutamine. Cys-381 functions as the Nucleophile; for glutamine hydrolysis in the catalytic mechanism. L-glutamine-binding positions include 382–385 (LGMQ), Glu-405, and Arg-462. Active-site residues include His-507 and Glu-509. Residues 532-555 (LPRSPQEALKQTQINSPNQSKNNP) are disordered. Residues 540–555 (LKQTQINSPNQSKNNP) are compositionally biased toward polar residues.

Belongs to the CTP synthase family. In terms of assembly, homotetramer.

It carries out the reaction UTP + L-glutamine + ATP + H2O = CTP + L-glutamate + ADP + phosphate + 2 H(+). The catalysed reaction is L-glutamine + H2O = L-glutamate + NH4(+). The enzyme catalyses UTP + NH4(+) + ATP = CTP + ADP + phosphate + 2 H(+). The protein operates within pyrimidine metabolism; CTP biosynthesis via de novo pathway; CTP from UDP: step 2/2. Allosterically activated by GTP, when glutamine is the substrate; GTP has no effect on the reaction when ammonia is the substrate. The allosteric effector GTP functions by stabilizing the protein conformation that binds the tetrahedral intermediate(s) formed during glutamine hydrolysis. Inhibited by the product CTP, via allosteric rather than competitive inhibition. Catalyzes the ATP-dependent amination of UTP to CTP with either L-glutamine or ammonia as the source of nitrogen. Regulates intracellular CTP levels through interactions with the four ribonucleotide triphosphates. The sequence is that of CTP synthase from Prochlorococcus marinus (strain MIT 9211).